We begin with the raw amino-acid sequence, 339 residues long: Phosphoribosylformylglycinamidine cyclo-ligase (339 aa).

This sequence belongs to the AIR synthase family.

It is found in the cytoplasm. It catalyses the reaction 2-formamido-N(1)-(5-O-phospho-beta-D-ribosyl)acetamidine + ATP = 5-amino-1-(5-phospho-beta-D-ribosyl)imidazole + ADP + phosphate + H(+). The protein operates within purine metabolism; IMP biosynthesis via de novo pathway; 5-amino-1-(5-phospho-D-ribosyl)imidazole from N(2)-formyl-N(1)-(5-phospho-D-ribosyl)glycinamide: step 2/2. This Methanobrevibacter smithii (strain ATCC 35061 / DSM 861 / OCM 144 / PS) protein is Phosphoribosylformylglycinamidine cyclo-ligase.